The sequence spans 131 residues: Large ribosomal subunit protein bL19 (131 aa).

Belongs to the bacterial ribosomal protein bL19 family.

Functionally, this protein is located at the 30S-50S ribosomal subunit interface and may play a role in the structure and function of the aminoacyl-tRNA binding site. This Polynucleobacter necessarius subsp. necessarius (strain STIR1) protein is Large ribosomal subunit protein bL19.